A 284-amino-acid polypeptide reads, in one-letter code: MPASLIDGREISALRRNELKQRVQHHVGLGQRPPGLAVVLIGNDPASVIYVSNKRKACEEVGITSHSYDLPAETTQEKLIQLINELNQSDKIDGILIQLPLPKHINERTIIEHIKPEKDVDGFHPYNLGRLAQRNPFLRPCTPLGIMNLLHHYELNVKRKHAVVIGASNIVGRPMSLELLLAGATVTICHKFTQQLQKFVEIADFLIVATGKMDVIATDWLREHQVVIDVGMHRLPDGSIRGDIDFKKAVEKVAWITPVPGGVGPMTIVTLLENTMMSAARLRE.

An NADP(+)-binding site is contributed by 166-168; that stretch reads GAS.

The protein belongs to the tetrahydrofolate dehydrogenase/cyclohydrolase family. As to quaternary structure, homodimer.

The catalysed reaction is (6R)-5,10-methylene-5,6,7,8-tetrahydrofolate + NADP(+) = (6R)-5,10-methenyltetrahydrofolate + NADPH. It catalyses the reaction (6R)-5,10-methenyltetrahydrofolate + H2O = (6R)-10-formyltetrahydrofolate + H(+). It functions in the pathway one-carbon metabolism; tetrahydrofolate interconversion. Functionally, catalyzes the oxidation of 5,10-methylenetetrahydrofolate to 5,10-methenyltetrahydrofolate and then the hydrolysis of 5,10-methenyltetrahydrofolate to 10-formyltetrahydrofolate. This chain is Bifunctional protein FolD, found in Legionella pneumophila (strain Paris).